The primary structure comprises 399 residues: RNA polymerase sigma factor SigA1 (399 aa).

The disordered stretch occupies residues 1–73 (MTQLISIDKE…DEDSVGEDED (73 aa)). The span at 60–73 (DAIDDEDSVGEDED) shows a compositional bias: acidic residues. The tract at residues 167–237 (MVQSNLRLVV…TRAIADQSRT (71 aa)) is sigma-70 factor domain-2. Residues 191 to 194 (DLIQ) carry the Interaction with polymerase core subunit RpoC motif. The sigma-70 factor domain-3 stretch occupies residues 246-321 (ETISRIKKTT…EADGETPEDE (76 aa)). Residues 334-387 (VLSTLSPRERDVLRLRYGLDDGRMKTLEEIGQLFNVTRERIRQIEAKALRKLRH) form a sigma-70 factor domain-4 region. The segment at residues 360–379 (LEEIGQLFNVTRERIRQIEA) is a DNA-binding region (H-T-H motif).

Belongs to the sigma-70 factor family. RpoD/SigA subfamily. Interacts transiently with the RNA polymerase catalytic core.

Its subcellular location is the cytoplasm. Functionally, sigma factors are initiation factors that promote the attachment of RNA polymerase to specific initiation sites and are then released. This sigma factor is the primary sigma factor during exponential growth. The sequence is that of RNA polymerase sigma factor SigA1 from Synechococcus elongatus (strain ATCC 33912 / PCC 7942 / FACHB-805) (Anacystis nidulans R2).